Here is a 376-residue protein sequence, read N- to C-terminus: Probable ureide permease A3 (376 aa).

Over 1–9 the chain is Extracellular; sequence HLVESKGGA. The helical transmembrane segment at 10–30 threads the bilayer; that stretch reads IACMFLALFFLGTWPALLTML. Residues 31-41 are Cytoplasmic-facing; that stretch reads ERRGRLPQHTY. Residues 42–62 form a helical membrane-spanning segment; the sequence is LDYSITNFFAALLIAFTFGEI. The Extracellular portion of the chain corresponds to 63–80; the sequence is GKGKPDEPNFLAQLAQDN. Residues 81–101 form a helical membrane-spanning segment; that stretch reads WPSVLFAMGGGVVLSLGNLSS. The Cytoplasmic portion of the chain corresponds to 102 to 103; the sequence is QY. Residues 104-124 form a helical membrane-spanning segment; it reads AFAFVGLSVTEVITASITVVI. Residues 125–137 are Extracellular-facing; sequence GTTLNYFLDDKIN. A helical membrane pass occupies residues 138-158; sequence KAEILFPGVGCFLIAVFLGFC. Over 159-231 the chain is Cytoplasmic; the sequence is RFNSSNASDN…RAIKVFGKST (73 aa). 223-230 is an ATP binding site; that stretch reads AIKVFGKS. Residues 232-252 traverse the membrane as a helical segment; sequence LIGLALTFSAGLCFSMFSPAF. Over 253–274 the chain is Extracellular; sequence NLATNDQWHTLPNGIPHLTVYT. The chain crosses the membrane as a helical span at residues 275–295; it reads AFFYFSISCFVIAIILNITFL. Topologically, residues 296–317 are cytoplasmic; the sequence is YHPVLNLPKSSLKAYLADSDGR. The chain crosses the membrane as a helical span at residues 318 to 338; the sequence is IWALLAGLLCGFGNSLQFMGG. Topologically, residues 339–376 are extracellular; sequence QAAGYQQQSLCRHFLCKHFWGVLLFGEYRRSSRKTYIC.

Belongs to the plant ureide permease (TC 2.A.7.19) family.

The protein localises to the membrane. In terms of biological role, transports a wide spectrum of oxo derivatives of heterocyclic nitrogen compounds. The protein is Probable ureide permease A3 (A3) of Vigna unguiculata (Cowpea).